Consider the following 124-residue polypeptide: V-type proton ATPase subunit F (124 aa).

It belongs to the V-ATPase F subunit family. As to quaternary structure, V-ATPase is a heteromultimeric enzyme composed of a peripheral catalytic V1 complex (components A to H) attached to an integral membrane V0 proton pore complex (components: a, c, c', c'', d, e, f and VOA1).

Its subcellular location is the vacuole membrane. Functionally, subunit of the V1 complex of vacuolar(H+)-ATPase (V-ATPase), a multisubunit enzyme composed of a peripheral complex (V1) that hydrolyzes ATP and a membrane integral complex (V0) that translocates protons. V-ATPase is responsible for acidifying and maintaining the pH of intracellular compartments. This is V-type proton ATPase subunit F (vma-7) from Neurospora crassa (strain ATCC 24698 / 74-OR23-1A / CBS 708.71 / DSM 1257 / FGSC 987).